Here is a 2083-residue protein sequence, read N- to C-terminus: Non-reducing polyketide synthase curS2 (2083 aa).

The tract at residues 9 to 246 is N-terminal acylcarrier protein transacylase domain (SAT); sequence LLFGDVTDPW…NELDIHALQH (238 aa). Residues 366–798 form the Ketosynthase family 3 (KS3) domain; it reads RDGIAIVGMA…GGNACLLLED (433 aa). Residues Cys543, His678, and His717 each act as for beta-ketoacyl synthase activity in the active site. Residues 895-1201 are malonyl-CoA:ACP transacylase (MAT) domain; it reads VFVFTGQGSH…THTLQPNTHN (307 aa). The active-site For acyl/malonyl transferase activity is Ser986. The N-terminal hotdog fold stretch occupies residues 1276–1415; it reads AQYLVSKSSS…DPAKTQADWD (140 aa). Positions 1276 to 1585 constitute a PKS/mFAS DH domain; sequence AQYLVSKSSS…YQELPRVTWK (310 aa). A product template (PT) domain region spans residues 1285–1581; sequence SPKVQVVFRA…IDLRYQELPR (297 aa). The segment at 1437–1585 is C-terminal hotdog fold; it reads GHRMQPEVFY…YQELPRVTWK (149 aa). One can recognise a Carrier domain in the interval 1637–1714; that stretch reads DFDEGLVDAI…DLRRAFGANK (78 aa). Ser1674 is subject to O-(pantetheine 4'-phosphoryl)serine. A disordered region spans residues 1710–1790; sequence FGANKPKTSK…KMDETDTSPA (81 aa). A compositionally biased stretch (low complexity) spans 1718–1736; sequence SKPQPGSTTPSSSQSSIPS. Residues 1745 to 1754 show a composition bias toward polar residues; it reads MSDTASSLGS. Over residues 1771 to 1784 the composition is skewed to basic and acidic residues; sequence LEPKPNHHLGKMDE. The thioesterase (TE) domain stretch occupies residues 1811–2058; it reads MMADGTGTIA…LSVAGDHLDL (248 aa). The active-site For thioesterase activity is His2065.

It functions in the pathway mycotoxin biosynthesis. Its function is as follows. Non-reducing polyketide synthase; part of the gene cluster that mediates the biosynthesis of 10,11-dehydrocurvularin, a prevalent fungal phytotoxin with heat shock response and immune-modulatory activities. The highly reducing polyketide synthase curS1 is responsible for biosynthesis up to the tetraketide stage. The non-reducing polyketide synthase curS2 then conducts four additional chain extension cycles, producing the unreduced part of the nascent octaketide from C-1 to C-8 in 10,11-dehydrocurvularin. The protein is Non-reducing polyketide synthase curS2 of Aspergillus terreus.